Consider the following 670-residue polypeptide: Transcription factor 4 (670 aa).

The essential for MYOD1 inhibition stretch occupies residues 1–83; the sequence is MHHQQRMAAL…GTPYDHMTSR (83 aa). Disordered regions lie at residues 24–244, 262–320, 335–378, 406–426, 465–573, and 637–670; these read AMFS…LGNS, LSYP…SQTG, HTNN…EGPL, PSTA…PSHN, SLLP…MANN, and KRRE…MGQM. Polar residues predominate over residues 29–49; that stretch reads PVSSGKNGPTSLASGHFTGSN. Residues serine 66, serine 87, and serine 92 each carry the phosphoserine modification. Composition is skewed to polar residues over residues 107–125, 136–154, 205–215, and 265–305; these read GSYS…QQSL, GTLS…SSNN, PAASTFPSSFF, and PSHS…TDSI. Residues 336–347 show a composition bias toward low complexity; that stretch reads TNNSFSSNPSTP. The span at 364–373 shows a compositional bias: polar residues; the sequence is NGGQASSSPN. Serine 371 carries the phosphoserine modification. The tract at residues 378 to 399 is leucine-zipper; that stretch reads LHSLQSRIEDRLERLDDAIHVL. Composition is skewed to low complexity over residues 466 to 479 and 502 to 511; these read LLPN…LPVQ and GQSVSSGSSE. Serine 514 carries the post-translational modification Phosphoserine. Composition is skewed to basic and acidic residues over residues 526-542 and 558-573; these read KSSE…DIKS and PEQK…MANN. The 54-residue stretch at 567-620 folds into the bHLH domain; the sequence is ERRMANNARERLRVRDINEAFKELGRMVQLHLKSDKPQTKLLILHQAVAVILSL. Positions 622 to 645 are class A specific domain; that stretch reads QQVRERNLNPKAACLKRREEEKVS.

Efficient DNA binding requires dimerization with another bHLH protein. Isoform 2 seems to form inactive heterodimers with MYOD1. Interacts with HIVEP2. Interacts with NEUROD2. Interacts with AGBL1. Interacts with BHLHA9. As to expression, expressed in the cerebral cortex, Purkinje and granule cell layers of the cerebellum, olfactory neuroepithelium, pyramidal cells of hippocampal layers CA1-CA4, and in the granular cells of the dentate gyrus.

It is found in the nucleus. Functionally, transcription factor that binds to the immunoglobulin enhancer Mu-E5/KE5-motif. Involved in the initiation of neuronal differentiation. Activates transcription by binding to the E box (5'-CANNTG-3'). Isoform 2 inhibits MYOD1 activation of the cardiac alpha-actin promoter. Binds to the E-box present in the somatostatin receptor 2 initiator element (SSTR2-INR) to activate transcription. May have a regulatory function in developmental processes as well as during neuronal plasticity. The protein is Transcription factor 4 (Tcf4) of Mus musculus (Mouse).